A 60-amino-acid chain; its full sequence is Large ribosomal subunit protein uL30 (60 aa).

It belongs to the universal ribosomal protein uL30 family. In terms of assembly, part of the 50S ribosomal subunit.

The polypeptide is Large ribosomal subunit protein uL30 (Idiomarina loihiensis (strain ATCC BAA-735 / DSM 15497 / L2-TR)).